The primary structure comprises 39 residues: Mu-theraphotoxin-Ae1a (39 aa).

Intrachain disulfides connect C7/C21, C14/C26, and C20/C33. F39 is modified (phenylalanine amide).

It belongs to the neurotoxin 10 (Hwtx-1) family. 47 subfamily. In terms of tissue distribution, expressed by the venom gland.

Its subcellular location is the secreted. In terms of biological role, insecticidal toxin that acts, at least partially, by inhibiting insect voltage-gated sodium (NaV) channels of several insect species. The toxin binds to the voltage sensor in NaV channel domain II and inhibits channel opening by shifting the threshold for channel activation to more positive voltages. The toxin binding is sensitive to residues in the S1-S2 loop of the domain II voltage sensor. In vivo, the recombinant toxin causes paralysis and/or death to two dipteran species (Lucilia cuprina and Drosophila melanogaster). In contrast, the toxin does not show paralytic or lethal effect on the cotton bollworm Helicoverpa armigera and the triatomine bug Rhodinius prolixus. This Augacephalus ezendami (Mozambique baboon spider) protein is Mu-theraphotoxin-Ae1a.